Consider the following 495-residue polypeptide: Ectonucleoside triphosphate diphosphohydrolase 2 (495 aa).

At 1 to 4 the chain is on the cytoplasmic side; it reads MAGK. Residues 5 to 25 traverse the membrane as a helical segment; sequence LVSLVPPLLLAAAGLTGLLLL. At 26 to 462 the chain is on the extracellular side; it reads CVPTQDVREP…PGLRKGTHFS (437 aa). A glycan (N-linked (GlcNAc...) asparagine) is linked at Asn-64. Cysteines 75 and 99 form a disulfide. An N-linked (GlcNAc...) asparagine glycan is attached at Asn-129. Glu-165 functions as the Proton acceptor in the catalytic mechanism. 204–208 provides a ligand contact to ATP; it reads GASTQ. Cystine bridges form between Cys-242/Cys-284 and Cys-265/Cys-310. N-linked (GlcNAc...) asparagine glycans are attached at residues Asn-294, Asn-306, and Asn-319. 2 disulfide bridges follow: Cys-323–Cys-328 and Cys-377–Cys-399. N-linked (GlcNAc...) asparagine glycosylation is found at Asn-378 and Asn-443. A helical membrane pass occupies residues 463–483; that stretch reads SWVALLLLFTVLILAALVLLL. Over 484–495 the chain is Cytoplasmic; that stretch reads RQVRSAKSPGAL.

Belongs to the GDA1/CD39 NTPase family. Ca(2+) is required as a cofactor. Mg(2+) serves as cofactor. As to expression, expressed in brain, heart, vas deferens, kidney, skeletal muscle, thymus, lung and spleen. Weak expression in liver.

The protein resides in the cell membrane. In terms of biological role, in the nervous system, could hydrolyze ATP and other nucleotides to regulate purinergic neurotransmission. Hydrolyzes ADP only to a marginal extent. The sequence is that of Ectonucleoside triphosphate diphosphohydrolase 2 (Entpd2) from Rattus norvegicus (Rat).